A 253-amino-acid chain; its full sequence is 5'-nucleotidase SurE (253 aa).

Residues Asp-8, Asp-9, Ser-39, and Asn-97 each coordinate a divalent metal cation.

Belongs to the SurE nucleotidase family. It depends on a divalent metal cation as a cofactor.

It localises to the cytoplasm. It catalyses the reaction a ribonucleoside 5'-phosphate + H2O = a ribonucleoside + phosphate. Nucleotidase that shows phosphatase activity on nucleoside 5'-monophosphates. In Aeromonas hydrophila subsp. hydrophila (strain ATCC 7966 / DSM 30187 / BCRC 13018 / CCUG 14551 / JCM 1027 / KCTC 2358 / NCIMB 9240 / NCTC 8049), this protein is 5'-nucleotidase SurE.